A 495-amino-acid polypeptide reads, in one-letter code: UDP-glycosyltransferase 71B7 (495 aa).

UDP-alpha-D-glucose-binding positions include Ser284, 351–353 (APQ), 368–376 (HCGWNSTLE), and 390–393 (YAEQ).

Belongs to the UDP-glycosyltransferase family.

The sequence is that of UDP-glycosyltransferase 71B7 (UGT71B7) from Arabidopsis thaliana (Mouse-ear cress).